Here is a 109-residue protein sequence, read N- to C-terminus: Large ribosomal subunit protein uL24 (109 aa).

Belongs to the universal ribosomal protein uL24 family. Part of the 50S ribosomal subunit.

In terms of biological role, one of two assembly initiator proteins, it binds directly to the 5'-end of the 23S rRNA, where it nucleates assembly of the 50S subunit. One of the proteins that surrounds the polypeptide exit tunnel on the outside of the subunit. The protein is Large ribosomal subunit protein uL24 of Legionella pneumophila (strain Corby).